The sequence spans 381 residues: Fe-S cluster assembly protein DRE2 (381 aa).

The tract at residues 8–165 is N-terminal SAM-like domain; sequence AQGSGRFLLL…KPDFGAQQAV (158 aa). The tract at residues 100-134 is disordered; that stretch reads RNRDNQIWGSGSDSAAGLGSSDGDGGGGEKMSSSE. A compositionally biased stretch (low complexity) spans 108 to 118; it reads GSGSDSAAGLG. Residues 119-128 show a composition bias toward gly residues; that stretch reads SSDGDGGGGE. The segment at 166 to 273 is linker; it reads PLKLGRKKNL…EEELLGEYDM (108 aa). Residues Cys-283, Cys-294, Cys-297, and Cys-299 each coordinate [2Fe-2S] cluster. The interval 283–299 is fe-S binding site A; it reads CRPKAGKRRRACKDCTC. Residues Cys-344, Cys-347, Cys-355, and Cys-358 each contribute to the [4Fe-4S] cluster site. 2 consecutive short sequence motifs (cx2C motif) follow at residues 344-347 and 355-358; these read CGNC and CDGC. Residues 344-358 are fe-S binding site B; that stretch reads CGNCALGDAFRCDGC.

The protein belongs to the anamorsin family. In terms of assembly, monomer. Interacts with TAH18. Interacts with MIA40. The cofactor is [2Fe-2S] cluster. [4Fe-4S] cluster serves as cofactor.

The protein resides in the cytoplasm. It localises to the mitochondrion intermembrane space. Component of the cytosolic iron-sulfur (Fe-S) protein assembly (CIA) machinery required for the maturation of extramitochondrial Fe-S proteins. Part of an electron transfer chain functioning in an early step of cytosolic Fe-S biogenesis, facilitating the de novo assembly of a [4Fe-4S] cluster on the scaffold complex CFD1-NBP35. Electrons are transferred to DRE2 from NADPH via the FAD- and FMN-containing protein TAH18. TAH18-DRE2 are also required for the assembly of the diferric tyrosyl radical cofactor of ribonucleotide reductase (RNR), probably by providing electrons for reduction during radical cofactor maturation in the catalytic small subunit RNR2. In Paracoccidioides brasiliensis (strain Pb18), this protein is Fe-S cluster assembly protein DRE2.